A 400-amino-acid chain; its full sequence is Acetate kinase (400 aa).

Asn9 is a binding site for Mg(2+). Lys16 contributes to the ATP binding site. Residue Arg90 participates in substrate binding. The active-site Proton donor/acceptor is the Asp147. Residues His207 to Gly211, Asp282 to Arg284, and Gly330 to Asn334 each bind ATP. Glu385 is a Mg(2+) binding site.

This sequence belongs to the acetokinase family. In terms of assembly, homodimer. The cofactor is Mg(2+). Mn(2+) is required as a cofactor.

It localises to the cytoplasm. It carries out the reaction acetate + ATP = acetyl phosphate + ADP. It participates in metabolic intermediate biosynthesis; acetyl-CoA biosynthesis; acetyl-CoA from acetate: step 1/2. Functionally, catalyzes the formation of acetyl phosphate from acetate and ATP. Can also catalyze the reverse reaction. The sequence is that of Acetate kinase from Staphylococcus aureus (strain USA300).